Here is a 191-residue protein sequence, read N- to C-terminus: ATP-dependent Clp protease proteolytic subunit 1 (191 aa).

Catalysis depends on Ser91, which acts as the Nucleophile. Residue His116 is part of the active site.

It belongs to the peptidase S14 family. In terms of assembly, fourteen ClpP subunits assemble into 2 heptameric rings which stack back to back to give a disk-like structure with a central cavity, resembling the structure of eukaryotic proteasomes.

It localises to the cytoplasm. It catalyses the reaction Hydrolysis of proteins to small peptides in the presence of ATP and magnesium. alpha-casein is the usual test substrate. In the absence of ATP, only oligopeptides shorter than five residues are hydrolyzed (such as succinyl-Leu-Tyr-|-NHMec, and Leu-Tyr-Leu-|-Tyr-Trp, in which cleavage of the -Tyr-|-Leu- and -Tyr-|-Trp bonds also occurs).. Cleaves peptides in various proteins in a process that requires ATP hydrolysis. Has a chymotrypsin-like activity. Plays a major role in the degradation of misfolded proteins. In Chlamydia caviae (strain ATCC VR-813 / DSM 19441 / 03DC25 / GPIC) (Chlamydophila caviae), this protein is ATP-dependent Clp protease proteolytic subunit 1.